Reading from the N-terminus, the 208-residue chain is Large ribosomal subunit protein uL4 (208 aa).

The tract at residues 45-89 is disordered; sequence RQGTHAHKNRSAVSGGGKKPWRQKGTGRARQGSTRSPQWRGGGTV.

The protein belongs to the universal ribosomal protein uL4 family. As to quaternary structure, part of the 50S ribosomal subunit.

Its function is as follows. One of the primary rRNA binding proteins, this protein initially binds near the 5'-end of the 23S rRNA. It is important during the early stages of 50S assembly. It makes multiple contacts with different domains of the 23S rRNA in the assembled 50S subunit and ribosome. Forms part of the polypeptide exit tunnel. The chain is Large ribosomal subunit protein uL4 from Lactococcus lactis subsp. cremoris (strain SK11).